The chain runs to 315 residues: Methionyl-tRNA formyltransferase (315 aa).

A (6S)-5,6,7,8-tetrahydrofolate-binding site is contributed by 113–116 (SLLP).

The protein belongs to the Fmt family.

It catalyses the reaction L-methionyl-tRNA(fMet) + (6R)-10-formyltetrahydrofolate = N-formyl-L-methionyl-tRNA(fMet) + (6S)-5,6,7,8-tetrahydrofolate + H(+). In terms of biological role, attaches a formyl group to the free amino group of methionyl-tRNA(fMet). The formyl group appears to play a dual role in the initiator identity of N-formylmethionyl-tRNA by promoting its recognition by IF2 and preventing the misappropriation of this tRNA by the elongation apparatus. This Klebsiella pneumoniae (strain 342) protein is Methionyl-tRNA formyltransferase.